Consider the following 185-residue polypeptide: Intraflagellar transport protein 22 homolog (185 aa).

Residues 10–17 (GPCESGKT), 63–67 (DCGGD), and 123–126 (HKPG) each bind GTP. A Phosphoserine modification is found at serine 137.

Belongs to the small GTPase superfamily. Rab family. Component of the IFT complex B, at least composed of IFT20, IFT22, IFT25, IFT27, IFT46, IFT52, TRAF3IP1/IFT54, IFT57, IFT74, IFT80, IFT81, and IFT88. Interacts with IFT88. Interacts with CFAP61.

The protein resides in the cell projection. It localises to the cilium. Functionally, small GTPase-like component of the intraflagellar transport (IFT) complex B. The chain is Intraflagellar transport protein 22 homolog (Ift22) from Mus musculus (Mouse).